Here is a 361-residue protein sequence, read N- to C-terminus: Phosphate acyltransferase (361 aa).

The interval 340 to 361 (VPADGAATEQGPTPRRIAPPRT) is disordered.

This sequence belongs to the PlsX family. Homodimer. Probably interacts with PlsY.

It is found in the cytoplasm. The enzyme catalyses a fatty acyl-[ACP] + phosphate = an acyl phosphate + holo-[ACP]. It participates in lipid metabolism; phospholipid metabolism. In terms of biological role, catalyzes the reversible formation of acyl-phosphate (acyl-PO(4)) from acyl-[acyl-carrier-protein] (acyl-ACP). This enzyme utilizes acyl-ACP as fatty acyl donor, but not acyl-CoA. This is Phosphate acyltransferase from Anaeromyxobacter dehalogenans (strain 2CP-1 / ATCC BAA-258).